The chain runs to 187 residues: Ion-translocating oxidoreductase complex subunit B (187 aa).

The segment at 1–26 is hydrophobic; that stretch reads MTHILFAVLVLALLALAFGIILGFAA. Residues 32–90 enclose the 4Fe-4S domain; that stretch reads EADPIVDQLDALLPQTQCGQCGYPGCKPYAEALANGDQINKCVPGGDATMRKIADLMGV. [4Fe-4S] cluster contacts are provided by cysteine 49, cysteine 52, cysteine 57, cysteine 73, cysteine 115, cysteine 118, cysteine 121, cysteine 125, cysteine 145, cysteine 148, cysteine 151, and cysteine 155. 2 consecutive 4Fe-4S ferredoxin-type domains span residues 106 to 135 and 136 to 165; these read KVAFIHEDQCIGCTKCIQACPVDAIVGATK and AMHTVIADECTGCDLCVDPCPTDCIEMIPV.

The protein belongs to the 4Fe4S bacterial-type ferredoxin family. RnfB subfamily. The complex is composed of six subunits: RnfA, RnfB, RnfC, RnfD, RnfE and RnfG. [4Fe-4S] cluster is required as a cofactor.

The protein resides in the cell inner membrane. Its function is as follows. Part of a membrane-bound complex that couples electron transfer with translocation of ions across the membrane. The sequence is that of Ion-translocating oxidoreductase complex subunit B from Aeromonas hydrophila subsp. hydrophila (strain ATCC 7966 / DSM 30187 / BCRC 13018 / CCUG 14551 / JCM 1027 / KCTC 2358 / NCIMB 9240 / NCTC 8049).